The sequence spans 373 residues: Bifunctional enzyme IspD/IspF (373 aa).

The tract at residues 1–213 is 2-C-methyl-D-erythritol 4-phosphate cytidylyltransferase; that stretch reads MSDLTLVLLG…CLQKPSATKR (213 aa). The tract at residues 213–373 is 2-C-methyl-D-erythritol 2,4-cyclodiphosphate synthase; the sequence is RIGNGLDVHA…TLHYFDWSEI (161 aa). Positions 219 and 221 each coordinate a divalent metal cation. 4-CDP-2-C-methyl-D-erythritol 2-phosphate-binding positions include 219-221 and 245-246; these read DVH and HS. Histidine 253 contributes to the a divalent metal cation binding site. 4-CDP-2-C-methyl-D-erythritol 2-phosphate-binding positions include 267–269, 272–276, 343–346, phenylalanine 350, and arginine 353; these read DIG, FPDSD, and TTTE.

In the N-terminal section; belongs to the IspD/TarI cytidylyltransferase family. IspD subfamily. The protein in the C-terminal section; belongs to the IspF family. A divalent metal cation serves as cofactor.

The catalysed reaction is 2-C-methyl-D-erythritol 4-phosphate + CTP + H(+) = 4-CDP-2-C-methyl-D-erythritol + diphosphate. The enzyme catalyses 4-CDP-2-C-methyl-D-erythritol 2-phosphate = 2-C-methyl-D-erythritol 2,4-cyclic diphosphate + CMP. It participates in isoprenoid biosynthesis; isopentenyl diphosphate biosynthesis via DXP pathway; isopentenyl diphosphate from 1-deoxy-D-xylulose 5-phosphate: step 2/6. The protein operates within isoprenoid biosynthesis; isopentenyl diphosphate biosynthesis via DXP pathway; isopentenyl diphosphate from 1-deoxy-D-xylulose 5-phosphate: step 4/6. Its function is as follows. Bifunctional enzyme that catalyzes the formation of 4-diphosphocytidyl-2-C-methyl-D-erythritol from CTP and 2-C-methyl-D-erythritol 4-phosphate (MEP) (IspD), and catalyzes the conversion of 4-diphosphocytidyl-2-C-methyl-D-erythritol 2-phosphate (CDP-ME2P) to 2-C-methyl-D-erythritol 2,4-cyclodiphosphate (ME-CPP) with a corresponding release of cytidine 5-monophosphate (CMP) (IspF). The sequence is that of Bifunctional enzyme IspD/IspF from Nitratiruptor sp. (strain SB155-2).